A 154-amino-acid polypeptide reads, in one-letter code: Transcriptional repressor NrdR (154 aa).

A zinc finger spans residues 3 to 34; it reads CPFCAHPDTRVADSRLMEERNAVRRRRHCPNC. The ATP-cone domain maps to 49–139; that stretch reads PAVIGPDKKR…LHKRFDNPAD (91 aa).

This sequence belongs to the NrdR family. Zn(2+) serves as cofactor.

In terms of biological role, negatively regulates transcription of bacterial ribonucleotide reductase nrd genes and operons by binding to NrdR-boxes. The sequence is that of Transcriptional repressor NrdR from Neisseria meningitidis serogroup B (strain ATCC BAA-335 / MC58).